The primary structure comprises 446 residues: RUN domain-containing protein 3A (446 aa).

An interaction with RAP2A region spans residues Met-1–Ala-298. The RUN domain occupies Asp-52 to Glu-189. Thr-215 carries the post-translational modification Phosphothreonine. A disordered region spans residues Asp-216–Pro-239. Ser-232 carries the post-translational modification Phosphoserine. Positions Tyr-267–Ile-322 form a coiled coil. The segment covering Pro-372–Gln-384 has biased composition (polar residues). The tract at residues Pro-372 to Pro-403 is disordered. The span at Arg-385–Glu-394 shows a compositional bias: basic and acidic residues. Residues Ser-416 and Ser-419 each carry the phosphoserine modification.

Belongs to the RUNDC3 family. As to quaternary structure, interacts with the GTP-bound form of RAP2A. In terms of tissue distribution, brain.

Functionally, may act as an effector of RAP2A in neuronal cells. The chain is RUN domain-containing protein 3A (Rundc3a) from Mus musculus (Mouse).